The following is a 412-amino-acid chain: Phosphoglycerate kinase 1 (412 aa).

Substrate-binding positions include 28-30 (DFN), 65-68 (HQGR), R122, and R162. ATP-binding positions include E336 and 361 to 364 (GGHT).

Belongs to the phosphoglycerate kinase family. As to quaternary structure, monomer.

Its subcellular location is the cytoplasm. The enzyme catalyses (2R)-3-phosphoglycerate + ATP = (2R)-3-phospho-glyceroyl phosphate + ADP. The protein operates within carbohydrate degradation; glycolysis; pyruvate from D-glyceraldehyde 3-phosphate: step 2/5. The chain is Phosphoglycerate kinase 1 from Methanosarcina acetivorans (strain ATCC 35395 / DSM 2834 / JCM 12185 / C2A).